Consider the following 481-residue polypeptide: uncharacterized protein (481 aa).

Belongs to the metallophosphoesterase superfamily.

This is an uncharacterized protein from Bacillus subtilis (strain 168).